The chain runs to 633 residues: Chitinase 2 (633 aa).

In terms of domain architecture, GH18 spans P151–V602. Residues Q275–N276 and G306–S309 contribute to the chitin site. Residue E349 is the Proton donor of the active site. Residues Y350, M422–D425, and W582 contribute to the chitin site.

Belongs to the glycosyl hydrolase 18 family. In terms of assembly, semipurified toxin complex consists of at least YenA1-YenA2-YenB-YenC1-YenC2-Chi1-Chi2. The Yen-TC:K9 subcomplex is about 26 nm tall and 22 nm in diameter with 5-fold symmetry and 5 copies of YenA1, YenA2, Chi1 and Chi2; the chitinase subunits may be solvent accessible on the exterior the complex. The Yen-TC:K9 subcomplex has no insecticidal activity. The native complex with additional YenB, YenC1 and YenC2 subunits is 16 nm taller and is insecticidal; the toxicity-conferring subunits are present at about 1 copy each.

It localises to the secreted. The catalysed reaction is Random endo-hydrolysis of N-acetyl-beta-D-glucosaminide (1-&gt;4)-beta-linkages in chitin and chitodextrins.. Its activity is regulated as follows. Toxin complex is secreted when grown at 25 degrees Celsius or less; at higher temperatures the proteins are present intracellularly but not secreted. In terms of biological role, part of an orally active toxin complex (TC) with strong insecticidal effects on larvae of the Coleoptera Costelytra zealandica, Acrossidius tasmania and Adoryphorus couloni and some Lepidoptera larvae. The TC has an endochitinase activity. This subunit might aid infection by degradation of the larval peritrophic membrane. The chain is Chitinase 2 from Yersinia entomophaga.